The chain runs to 525 residues: Probable pectinesterase/pectinesterase inhibitor 44 (525 aa).

The first 19 residues, 1-19 (MSCLKYFLILLMLGLCVSS), serve as a signal peptide directing secretion. Residues 30–153 (VPASEFVSSI…YSMLRELLPL (124 aa)) form a pectinesterase inhibitor 44 region. Asn98 carries N-linked (GlcNAc...) asparagine glycosylation. The segment at 157–192 (EQKPKAVSKPGPIAKGPKAPPGRKLRDTDEDESLQF) is disordered. The segment at 212–509 (DVSVALDGTG…FTVSQFIKGN (298 aa)) is pectinesterase 44. N-linked (GlcNAc...) asparagine glycosylation is found at Asn222 and Asn278. The substrate site is built by Thr287 and Gln317. Asp340 functions as the Proton donor; for pectinesterase activity in the catalytic mechanism. A disulfide bridge links Cys354 with Cys374. Asp361 (nucleophile; for pectinesterase activity) is an active-site residue. N-linked (GlcNAc...) asparagine glycosylation is found at Asn409 and Asn421. Substrate contacts are provided by Arg429 and Trp431. 3 N-linked (GlcNAc...) asparagine glycosylation sites follow: Asn443, Asn492, and Asn499.

It in the N-terminal section; belongs to the PMEI family. In the C-terminal section; belongs to the pectinesterase family. As to expression, expressed in siliques.

It localises to the secreted. Its subcellular location is the cell wall. It carries out the reaction [(1-&gt;4)-alpha-D-galacturonosyl methyl ester](n) + n H2O = [(1-&gt;4)-alpha-D-galacturonosyl](n) + n methanol + n H(+). It participates in glycan metabolism; pectin degradation; 2-dehydro-3-deoxy-D-gluconate from pectin: step 1/5. Its function is as follows. Acts in the modification of cell walls via demethylesterification of cell wall pectin. The polypeptide is Probable pectinesterase/pectinesterase inhibitor 44 (PME44) (Arabidopsis thaliana (Mouse-ear cress)).